Reading from the N-terminus, the 377-residue chain is Erythronate-4-phosphate dehydrogenase (377 aa).

2 residues coordinate substrate: serine 45 and threonine 66. The NAD(+) site is built by aspartate 146 and threonine 175. The active site involves arginine 208. Aspartate 232 contacts NAD(+). Glutamate 237 is a catalytic residue. Residue histidine 254 is the Proton donor of the active site. Position 257 (glycine 257) interacts with NAD(+). Tyrosine 258 provides a ligand contact to substrate.

The protein belongs to the D-isomer specific 2-hydroxyacid dehydrogenase family. PdxB subfamily. In terms of assembly, homodimer.

It localises to the cytoplasm. The catalysed reaction is 4-phospho-D-erythronate + NAD(+) = (R)-3-hydroxy-2-oxo-4-phosphooxybutanoate + NADH + H(+). Its pathway is cofactor biosynthesis; pyridoxine 5'-phosphate biosynthesis; pyridoxine 5'-phosphate from D-erythrose 4-phosphate: step 2/5. Functionally, catalyzes the oxidation of erythronate-4-phosphate to 3-hydroxy-2-oxo-4-phosphonooxybutanoate. The sequence is that of Erythronate-4-phosphate dehydrogenase from Sodalis glossinidius (strain morsitans).